Consider the following 228-residue polypeptide: Ankyrin repeat domain-containing protein 46 (228 aa).

4 ANK repeats span residues 11 to 40 (QTNVPLLQACIDGDFTYSKRLLESGFDPNI), 44 to 74 (RGRTGLHLAAARGNVDICQLLHKFGADPLAT), 77 to 103 (QGNTALHLCGHVDTIQFLVSNGLKIDI), and 107 to 138 (QGATPLVLAKRRGVNKDVIRLLESLEEQEVKG). Residues 195-215 (VLLLILVIALLSLGIAYYVSG) traverse the membrane as a helical segment.

It localises to the membrane. This Rattus norvegicus (Rat) protein is Ankyrin repeat domain-containing protein 46 (Ankrd46).